The sequence spans 236 residues: 2-C-methyl-D-erythritol 4-phosphate cytidylyltransferase (236 aa).

This sequence belongs to the IspD/TarI cytidylyltransferase family. IspD subfamily.

The catalysed reaction is 2-C-methyl-D-erythritol 4-phosphate + CTP + H(+) = 4-CDP-2-C-methyl-D-erythritol + diphosphate. It participates in isoprenoid biosynthesis; isopentenyl diphosphate biosynthesis via DXP pathway; isopentenyl diphosphate from 1-deoxy-D-xylulose 5-phosphate: step 2/6. Catalyzes the formation of 4-diphosphocytidyl-2-C-methyl-D-erythritol from CTP and 2-C-methyl-D-erythritol 4-phosphate (MEP). The sequence is that of 2-C-methyl-D-erythritol 4-phosphate cytidylyltransferase from Alkaliphilus oremlandii (strain OhILAs) (Clostridium oremlandii (strain OhILAs)).